The following is a 110-amino-acid chain: Protein C-ets-2 (110 aa).

The segment at residues 1 to 84 is a DNA-binding region (ETS); sequence SGPIQLWQFL…AGKRYVYRFV (84 aa).

This sequence belongs to the ETS family.

It is found in the nucleus. Its function is as follows. Probable transcription factor. This chain is Protein C-ets-2 (ETS-2), found in Lytechinus variegatus (Green sea urchin).